A 650-amino-acid polypeptide reads, in one-letter code: FAS-associated factor 1 (650 aa).

Residues 1–57 enclose the UBA domain; it reads MASNMDREMILADFQACTGIENIDEAITLLEQNNWDLVAAINGVIPQENGILQSEYG. The interval 62 to 87 is disordered; the sequence is PGPAFNPASHPASAPTSSSSSAFRPV. Low complexity predominate over residues 68 to 83; sequence PASHPASAPTSSSSSA. Ser320 carries the post-translational modification Phosphoserine. One can recognise a UBX domain in the interval 569-646; the sequence is NAEPVSKLRI…KLFPQETLFL (78 aa). A Phosphothreonine modification is found at Thr580. Ser582 is modified (phosphoserine).

Interacts with CDT1 and ATPase VCP/p97. Interacts (via UBA domain) with FAS (via death domain). Interacts (via UBA domain) with NLRP12 (via DAPIN/PYRIN domain). In terms of tissue distribution, most abundant in testis, slightly less abundant in skeletal muscle and heart, followed by prostate, thymus, ovary, small intestine, and colon. Not detected in the peripheral blood leukocytes.

Its subcellular location is the nucleus. Its function is as follows. Ubiquitin-binding protein. Required for the progression of DNA replication forks by targeting DNA replication licensing factor CDT1 for degradation. Potentiates but cannot initiate FAS-induced apoptosis. This chain is FAS-associated factor 1 (FAF1), found in Homo sapiens (Human).